Here is a 71-residue protein sequence, read N- to C-terminus: uncharacterized protein (71 aa).

Residues methionine 1 to lysine 16 are Cytoplasmic-facing. The helical transmembrane segment at leucine 17–tyrosine 38 threads the bilayer. Over methionine 39–cysteine 69 the chain is Extracellular. The N-linked (GlcNAc...) asparagine; by host glycan is linked to asparagine 53.

Belongs to the asfivirus X69R family.

It is found in the host membrane. This is an uncharacterized protein from African swine fever virus (isolate Pig/Kenya/KEN-50/1950) (ASFV).